Consider the following 309-residue polypeptide: 4-diphosphocytidyl-2-C-methyl-D-erythritol kinase (309 aa).

Residue lysine 28 is part of the active site. Residue 120 to 130 coordinates ATP; sequence PSQAGMGGGSS. Aspartate 162 is a catalytic residue.

It belongs to the GHMP kinase family. IspE subfamily.

It catalyses the reaction 4-CDP-2-C-methyl-D-erythritol + ATP = 4-CDP-2-C-methyl-D-erythritol 2-phosphate + ADP + H(+). It participates in isoprenoid biosynthesis; isopentenyl diphosphate biosynthesis via DXP pathway; isopentenyl diphosphate from 1-deoxy-D-xylulose 5-phosphate: step 3/6. Its function is as follows. Catalyzes the phosphorylation of the position 2 hydroxy group of 4-diphosphocytidyl-2C-methyl-D-erythritol. The chain is 4-diphosphocytidyl-2-C-methyl-D-erythritol kinase from Polaromonas sp. (strain JS666 / ATCC BAA-500).